Consider the following 325-residue polypeptide: Tetraacyldisaccharide 4'-kinase (325 aa).

ATP is bound at residue 55–62 (TAGGNGKT).

This sequence belongs to the LpxK family.

It carries out the reaction a lipid A disaccharide + ATP = a lipid IVA + ADP + H(+). The protein operates within glycolipid biosynthesis; lipid IV(A) biosynthesis; lipid IV(A) from (3R)-3-hydroxytetradecanoyl-[acyl-carrier-protein] and UDP-N-acetyl-alpha-D-glucosamine: step 6/6. In terms of biological role, transfers the gamma-phosphate of ATP to the 4'-position of a tetraacyldisaccharide 1-phosphate intermediate (termed DS-1-P) to form tetraacyldisaccharide 1,4'-bis-phosphate (lipid IVA). The sequence is that of Tetraacyldisaccharide 4'-kinase from Salmonella typhi.